We begin with the raw amino-acid sequence, 170 residues long: NADH-quinone oxidoreductase subunit J (170 aa).

The next 5 helical transmembrane spans lie at 1-21 (MEFV…FVII), 30-50 (VYLI…GAFF), 56-76 (VIIY…MLNI), 94-114 (IGPS…IFFL), and 138-158 (VFLV…IFHI).

This sequence belongs to the complex I subunit 6 family. In terms of assembly, composed of 13 different subunits. Subunits NuoA, H, J, K, L, M, N constitute the membrane sector of the complex.

It localises to the cell membrane. It catalyses the reaction a quinone + NADH + 5 H(+)(in) = a quinol + NAD(+) + 4 H(+)(out). NDH-1 shuttles electrons from NADH, via FMN and iron-sulfur (Fe-S) centers, to quinones in the respiratory chain. Couples the redox reaction to proton translocation (for every two electrons transferred, four hydrogen ions are translocated across the cytoplasmic membrane), and thus conserves the redox energy in a proton gradient. The polypeptide is NADH-quinone oxidoreductase subunit J (nuoJ) (Buchnera aphidicola subsp. Acyrthosiphon pisum (strain APS) (Acyrthosiphon pisum symbiotic bacterium)).